A 311-amino-acid polypeptide reads, in one-letter code: Aspartate carbamoyltransferase catalytic subunit (311 aa).

Residues arginine 55 and threonine 56 each coordinate carbamoyl phosphate. Residue lysine 85 coordinates L-aspartate. Residues arginine 106, histidine 135, and glutamine 138 each coordinate carbamoyl phosphate. L-aspartate contacts are provided by arginine 168 and arginine 230. Carbamoyl phosphate-binding residues include leucine 268 and proline 269.

Belongs to the aspartate/ornithine carbamoyltransferase superfamily. ATCase family. Heterododecamer (2C3:3R2) of six catalytic PyrB chains organized as two trimers (C3), and six regulatory PyrI chains organized as three dimers (R2).

It carries out the reaction carbamoyl phosphate + L-aspartate = N-carbamoyl-L-aspartate + phosphate + H(+). The protein operates within pyrimidine metabolism; UMP biosynthesis via de novo pathway; (S)-dihydroorotate from bicarbonate: step 2/3. Functionally, catalyzes the condensation of carbamoyl phosphate and aspartate to form carbamoyl aspartate and inorganic phosphate, the committed step in the de novo pyrimidine nucleotide biosynthesis pathway. This chain is Aspartate carbamoyltransferase catalytic subunit, found in Salmonella dublin (strain CT_02021853).